The sequence spans 517 residues: Xyloglucan galactosyltransferase XLT2 (517 aa).

Positions 1–31 (MLPVSNPSSPEHLLKKSRTPDSTTSIDRKNS) are disordered. Residues 1 to 49 (MLPVSNPSSPEHLLKKSRTPDSTTSIDRKNSFNSLHSVGNRSSYIAASR) are Cytoplasmic-facing. The segment covering 20–31 (PDSTTSIDRKNS) has biased composition (polar residues). The helical; Signal-anchor for type II membrane protein transmembrane segment at 50 to 70 (SHCTWLILSLLSLQLILFLTL) threads the bilayer. The Lumenal segment spans residues 71–517 (RSIPFPHRHI…KEQEKWYKWR (447 aa)). Asparagine 250, asparagine 288, asparagine 377, and asparagine 449 each carry an N-linked (GlcNAc...) asparagine glycan.

Belongs to the glycosyltransferase 47 family. Interacts with CSLC4, FUT1, XXT2 and XXT5. Expressed in roots, hypocotyls, cotyledons, leaves, stems and flowers.

It is found in the golgi apparatus membrane. In terms of biological role, functions in xyloglucan synthesis by adding side chains to the xylosylated glucan backbone. Involved in galactosylating hemicellulose xyloglucan (XyG) at the second position of the XXXG motif to form XLXG. Associates with other xyloglucan-synthesizing enzymes to form multiprotein complexes for xyloglucan synthesis in the Golgi. The chain is Xyloglucan galactosyltransferase XLT2 from Arabidopsis thaliana (Mouse-ear cress).